The sequence spans 328 residues: Probable D,D-dipeptide transport ATP-binding protein DdpD (328 aa).

An ABC transporter domain is found at 6–257; the sequence is LDIQQLHLSF…PRHPYTIGLL (252 aa). 42 to 49 contacts ATP; the sequence is GESGSGKS.

Belongs to the ABC transporter superfamily. The complex is composed of two ATP-binding proteins (DdpD and DdpF), two transmembrane proteins (DdpB and DdpC) and a solute-binding protein (DdpA).

The protein resides in the cell inner membrane. Its function is as follows. Part of the ABC transporter complex DdpABCDF, which is probably involved in D,D-dipeptide transport. Probably responsible for energy coupling to the transport system. This is Probable D,D-dipeptide transport ATP-binding protein DdpD from Escherichia coli (strain K12).